We begin with the raw amino-acid sequence, 545 residues long: Chaperonin GroEL 5 (545 aa).

ATP-binding positions include 30–33, K51, 87–91, G415, and D495; these read TLGP and DGTTT.

The protein belongs to the chaperonin (HSP60) family. Forms a cylinder of 14 subunits composed of two heptameric rings stacked back-to-back. Interacts with the co-chaperonin GroES.

The protein localises to the cytoplasm. The enzyme catalyses ATP + H2O + a folded polypeptide = ADP + phosphate + an unfolded polypeptide.. Functionally, together with its co-chaperonin GroES, plays an essential role in assisting protein folding. The GroEL-GroES system forms a nano-cage that allows encapsulation of the non-native substrate proteins and provides a physical environment optimized to promote and accelerate protein folding. The chain is Chaperonin GroEL 5 from Sinorhizobium medicae (strain WSM419) (Ensifer medicae).